The primary structure comprises 387 residues: Pepsin II-2/3 (387 aa).

Positions 1-15 are cleaved as a signal peptide; it reads MKWLLLLGLLALSEC. Positions 16-59 are cleaved as a propeptide — activation peptide; it reads IVHKVPLVRKKSLRKNLIEKGLLQDYLKTHTPNPATKYFPKETF. The Peptidase A1 domain occupies 75–384; the sequence is YFGTISIGTP…DRANNQLGLA (310 aa). Residue Asp93 is part of the active site. Cysteines 106 and 111 form a disulfide. Phosphoserine is present on Ser129. Cys267 and Cys271 form a disulfide bridge. Asp276 is an active-site residue. Cys310 and Cys343 form a disulfide bridge.

The protein belongs to the peptidase A1 family.

The protein localises to the secreted. The enzyme catalyses Preferential cleavage: hydrophobic, preferably aromatic, residues in P1 and P1' positions. Cleaves 1-Phe-|-Val-2, 4-Gln-|-His-5, 13-Glu-|-Ala-14, 14-Ala-|-Leu-15, 15-Leu-|-Tyr-16, 16-Tyr-|-Leu-17, 23-Gly-|-Phe-24, 24-Phe-|-Phe-25 and 25-Phe-|-Tyr-26 bonds in the B chain of insulin.. Shows particularly broad specificity; although bonds involving phenylalanine and leucine are preferred, many others are also cleaved to some extent. This chain is Pepsin II-2/3, found in Oryctolagus cuniculus (Rabbit).